The sequence spans 633 residues: Copine-7 (633 aa).

C2 domains follow at residues 2–133 and 212–339; these read SAGS…MRVS and NAGK…AQWD. Positions 245, 251, 307, 309, and 315 each coordinate Ca(2+). Residues 382-581 enclose the VWFA domain; it reads HFTVAIDFTA…PALRDIVQFV (200 aa).

Belongs to the copine family. Ca(2+) is required as a cofactor. As to expression, expressed in the brain, testis, thymus and small intestine.

It is found in the cytoplasm. It localises to the nucleus. Its subcellular location is the cell membrane. Functionally, calcium-dependent phospholipid-binding protein that may play a role in calcium-mediated intracellular processes. The polypeptide is Copine-7 (Homo sapiens (Human)).